The chain runs to 270 residues: Eukaryotic translation initiation factor 2 subunit beta (270 aa).

The tract at residues 1 to 38 (MADEEQMERKEEATEIAPFDPTKKKKKKKVVIQDPADE) is disordered.

The protein belongs to the eIF-2-beta/eIF-5 family. Eukaryotic translation initiation factor 2 eIF2 is a heterotrimeric complex composed of an alpha, a beta and a gamma subunit.

The protein localises to the cytoplasm. The protein resides in the cytosol. Its function is as follows. Component of the eIF2 complex that functions in the early steps of protein synthesis by forming a ternary complex with GTP and initiator tRNA. This complex binds to a 40S ribosomal subunit, followed by mRNA binding to form a 43S pre-initiation complex (43S PIC). Junction of the 60S ribosomal subunit to form the 80S initiation complex is preceded by hydrolysis of the GTP bound to eIF2 and release of an eIF2-GDP binary complex. In order for eIF2 to recycle and catalyze another round of initiation, the GDP bound to eIF2 must exchange with GTP by way of a reaction catalyzed by eIF2B. This chain is Eukaryotic translation initiation factor 2 subunit beta, found in Triticum aestivum (Wheat).